Reading from the N-terminus, the 219-residue chain is Exosomal polycystin-1-interacting protein (219 aa).

The first 19 residues, 1–19 (MAPPSRHCLLLISTLGVFA), serve as a signal peptide directing secretion. 5 N-linked (GlcNAc...) asparagine glycosylation sites follow: asparagine 29, asparagine 42, asparagine 95, asparagine 188, and asparagine 210.

Belongs to the EPCIP family. As to quaternary structure, homooligomer. Interacts with PKD1 (via the PKD repeats in the N-terminal extracellular region); the interaction is not dependent on N-glycosylation of either protein. Post-translationally, N-glycosylated. As to expression, detected in the kidney and in the endothelium of large blood vessels (at protein level).

Its subcellular location is the vesicle. It localises to the secreted. It is found in the extracellular exosome. Its function is as follows. Likely to be involved with PKD1 in the detection, sequestration and exocytosis of senescent mitochondria. In Homo sapiens (Human), this protein is Exosomal polycystin-1-interacting protein.